Consider the following 114-residue polypeptide: Probable non-functional T cell receptor beta variable 5-7 (114 aa).

Positions M1–A21 are cleaved as a signal peptide. Residues G22–L114 enclose the Ig-like domain. An intrachain disulfide couples C42 to C110. N-linked (GlcNAc...) asparagine glycosylation occurs at N90.

Alpha-beta TR is a heterodimer composed of an alpha and beta chain; disulfide-linked. The alpha-beta TR is associated with the transmembrane signaling CD3 coreceptor proteins to form the TR-CD3 (TcR or TCR). The assembly of alpha-beta TR heterodimers with CD3 occurs in the endoplasmic reticulum where a single alpha-beta TR heterodimer associates with one CD3D-CD3E heterodimer, one CD3G-CD3E heterodimer and one CD247 homodimer forming a stable octameric structure. CD3D-CD3E and CD3G-CD3E heterodimers preferentially associate with TR alpha and TR beta chains, respectively. The association of the CD247 homodimer is the last step of TcR assembly in the endoplasmic reticulum and is required for transport to the cell surface.

It localises to the cell membrane. In terms of biological role, probable non-functional open reading frame (ORF) of V region of the variable domain of T cell receptor (TR) beta chain. Non-functional ORF generally cannot participate in the synthesis of a productive T cell receptor (TR) chain due to altered V-(D)-J or switch recombination and/or splicing site (at mRNA level) and/or conserved amino acid change (protein level). Alpha-beta T cell receptors are antigen specific receptors which are essential to the immune response and are present on the cell surface of T lymphocytes. Recognize peptide-major histocompatibility (MH) (pMH) complexes that are displayed by antigen presenting cells (APC), a prerequisite for efficient T cell adaptive immunity against pathogens. Binding of alpha-beta TR to pMH complex initiates TR-CD3 clustering on the cell surface and intracellular activation of LCK that phosphorylates the ITAM motifs of CD3G, CD3D, CD3E and CD247 enabling the recruitment of ZAP70. In turn ZAP70 phosphorylates LAT, which recruits numerous signaling molecules to form the LAT signalosome. The LAT signalosome propagates signal branching to three major signaling pathways, the calcium, the mitogen-activated protein kinase (MAPK) kinase and the nuclear factor NF-kappa-B (NF-kB) pathways, leading to the mobilization of transcription factors that are critical for gene expression and essential for T cell growth and differentiation. The T cell repertoire is generated in the thymus, by V-(D)-J rearrangement. This repertoire is then shaped by intrathymic selection events to generate a peripheral T cell pool of self-MH restricted, non-autoaggressive T cells. Post-thymic interaction of alpha-beta TR with the pMH complexes shapes TR structural and functional avidity. This Homo sapiens (Human) protein is Probable non-functional T cell receptor beta variable 5-7.